The sequence spans 235 residues: uncharacterized protein (235 aa).

This is an uncharacterized protein from Invertebrate iridescent virus 6 (IIV-6).